Consider the following 108-residue polypeptide: UPF0145 protein ACIAD2946 (108 aa).

This sequence belongs to the UPF0145 family.

The polypeptide is UPF0145 protein ACIAD2946 (Acinetobacter baylyi (strain ATCC 33305 / BD413 / ADP1)).